We begin with the raw amino-acid sequence, 120 residues long: UPF0231 protein YacL (120 aa).

It belongs to the UPF0231 family.

The sequence is that of UPF0231 protein YacL from Escherichia coli (strain SMS-3-5 / SECEC).